A 132-amino-acid polypeptide reads, in one-letter code: Small ribosomal subunit protein uS8 (132 aa).

The protein belongs to the universal ribosomal protein uS8 family. As to quaternary structure, part of the 30S ribosomal subunit. Contacts proteins S5 and S12.

Functionally, one of the primary rRNA binding proteins, it binds directly to 16S rRNA central domain where it helps coordinate assembly of the platform of the 30S subunit. The polypeptide is Small ribosomal subunit protein uS8 (Bifidobacterium animalis subsp. lactis (strain AD011)).